A 74-amino-acid polypeptide reads, in one-letter code: U4-theraphotoxin-Cg1a (74 aa).

An N-terminal signal peptide occupies residues 1-19 (MNATIFALLLLLNLAMYNA). Residues 20-39 (AEQSSETDMDDTLLIPEINR) constitute a propeptide that is removed on maturation. 3 disulfide bridges follow: Cys-42–Cys-56, Cys-49–Cys-61, and Cys-55–Cys-71.

This sequence belongs to the neurotoxin 36 family. 01 subfamily. As to expression, expressed by the venom gland.

Its subcellular location is the secreted. Probable ion channel inhibitor. In Chilobrachys guangxiensis (Chinese earth tiger tarantula), this protein is U4-theraphotoxin-Cg1a.